A 298-amino-acid chain; its full sequence is (S)-ureidoglycine aminohydrolase (298 aa).

The N-terminal stretch at 1-20 (MRSLYLIVFIVISLVKASKS) is a signal peptide. The region spanning 222–288 (TMDFQPGEFL…ALGKTRSRYL (67 aa)) is the Cupin type-2 domain. 4 residues coordinate Mn(2+): Glu235, His237, His241, and Gln275. Glu235 contacts substrate. Residues Gln275, Tyr287, and Lys291 each coordinate substrate.

Belongs to the UGHY family. In terms of assembly, homooctamer. Mn(2+) is required as a cofactor.

The protein localises to the endoplasmic reticulum. It carries out the reaction (S)-2-ureidoglycine + H2O = (S)-ureidoglycolate + NH4(+). Its function is as follows. Involved in the catabolism of purine nucleotides. Can use (S)-2-ureidoglycine as substrate, but not allantoate. The sequential activity of AAH, UGLYAH and UAH allows a complete purine breakdown without the intermediate generation of urea. The polypeptide is (S)-ureidoglycine aminohydrolase (UGLYAH) (Arabidopsis thaliana (Mouse-ear cress)).